A 472-amino-acid chain; its full sequence is Transmembrane protein 8B (472 aa).

Residues 1 to 10 (MNMPQSLGTQ) are compositionally biased toward low complexity. The segment at 1–24 (MNMPQSLGTQPLPPEPPSLGTPIE) is disordered. Topologically, residues 1 to 233 (MNMPQSLGTQ…ADALTYGFQL (233 aa)) are extracellular. The N-linked (GlcNAc...) asparagine glycan is linked to Asn100. The region spanning 182–221 (FLSPCVDDCGPYGQCKLLRTHNYLYAACECKAGWRGWGCT) is the EGF-like domain. 3 disulfide bridges follow: Cys186/Cys196, Cys190/Cys209, and Cys211/Cys220. Residues 234–254 (LSTLLLCLSNLMFLPPVVLAI) form a helical membrane-spanning segment. Topologically, residues 255-257 (RSR) are cytoplasmic. Residues 258-277 (YVLEAAVYTFTMFFSTFYHA) form a helical membrane-spanning segment. The Extracellular portion of the chain corresponds to 278-292 (CDQPGIVVFCIMDYD). A helical membrane pass occupies residues 293 to 313 (VLQFCDFLGSLMSVWVTVIAM). Topologically, residues 314-315 (AR) are cytoplasmic. A helical transmembrane segment spans residues 316–336 (LQPVIKQVLYLLGAMLLSMAL). The Extracellular segment spans residues 337–342 (QLDRHG). Residues 343–363 (LWNLLGPSLFALGILATAWTV) form a helical membrane-spanning segment. At 364-379 (RSVRRRHCYPPTWRRW) the chain is on the cytoplasmic side. Residues 380–400 (LFYLCPGSLIAGSAVLLYAFV) form a helical membrane-spanning segment. The Extracellular portion of the chain corresponds to 401-405 (ETRDN). Residues 406 to 426 (YFYIHSIWHMLIAGSVGFLLP) traverse the membrane as a helical segment. Residues 427–472 (PRAKTDRRVPSGARARGCGYQLCINEQEELGLVGPGGTTVSSICVS) are Cytoplasmic-facing.

Belongs to the TMEM8 family. May interact with EZR. Post-translationally, N-glycosylated.

Its subcellular location is the cell membrane. The protein localises to the cytoplasm. The protein resides in the nucleus. It localises to the mitochondrion. It is found in the endoplasmic reticulum. Functionally, may function as a regulator of the EGFR pathway. Probable tumor suppressor which may function in cell growth, proliferation and adhesion. The polypeptide is Transmembrane protein 8B (Tmem8b) (Mus musculus (Mouse)).